We begin with the raw amino-acid sequence, 361 residues long: tRNA 2-selenouridine synthase (361 aa).

The Rhodanese domain occupies 12-135 (VLKNIPLIDV…FRRYLIDHLE (124 aa)). The active-site S-selanylcysteine intermediate is Cys-95.

Belongs to the SelU family. Monomer.

The catalysed reaction is 5-methylaminomethyl-2-thiouridine(34) in tRNA + selenophosphate + (2E)-geranyl diphosphate + H2O + H(+) = 5-methylaminomethyl-2-selenouridine(34) in tRNA + (2E)-thiogeraniol + phosphate + diphosphate. It catalyses the reaction 5-methylaminomethyl-2-thiouridine(34) in tRNA + (2E)-geranyl diphosphate = 5-methylaminomethyl-S-(2E)-geranyl-thiouridine(34) in tRNA + diphosphate. The enzyme catalyses 5-methylaminomethyl-S-(2E)-geranyl-thiouridine(34) in tRNA + selenophosphate + H(+) = 5-methylaminomethyl-2-(Se-phospho)selenouridine(34) in tRNA + (2E)-thiogeraniol. It carries out the reaction 5-methylaminomethyl-2-(Se-phospho)selenouridine(34) in tRNA + H2O = 5-methylaminomethyl-2-selenouridine(34) in tRNA + phosphate. Involved in the post-transcriptional modification of the uridine at the wobble position (U34) of tRNA(Lys), tRNA(Glu) and tRNA(Gln). Catalyzes the conversion of 2-thiouridine (S2U-RNA) to 2-selenouridine (Se2U-RNA). Acts in a two-step process involving geranylation of 2-thiouridine (S2U) to S-geranyl-2-thiouridine (geS2U) and subsequent selenation of the latter derivative to 2-selenouridine (Se2U) in the tRNA chain. This chain is tRNA 2-selenouridine synthase, found in Hydrogenovibrio crunogenus (strain DSM 25203 / XCL-2) (Thiomicrospira crunogena).